The chain runs to 160 residues: MGVFTYETEFTSVIPPPRLFKAFILDADNLIPKIAPQAVKCAEIIEGDGGVGTIKKITFGEGSQFGSVTHKIDGIDKENFVYSYSLIEGDALSDKIEKISYETKLVSSSDGGSIIKSTSNYHTKGDVEIKEEHVKAGKEKASHLFKLVEGYLLANPNEYC.

The protein belongs to the BetVI family. In terms of assembly, monomer. Interacts with AP. In terms of tissue distribution, highly expressed in ripe red fruits. Expressed in roots and white fruits. Expressed at low levels in open flowers.

In terms of biological role, involved in the control of flavonoid biosynthesis in fruits, probably by binding directly to natural flavonoids. Binds the natural flavonoid myricetin with affinities in the low micromolar range. The polypeptide is Major strawberry allergen Fra a 1-2 (Fragaria ananassa (Strawberry)).